Reading from the N-terminus, the 255-residue chain is tRNA-cytidine(32) 2-sulfurtransferase (255 aa).

A PP-loop motif motif is present at residues 37–42 (SGGKDS). Residues Cys112, Cys115, and Cys202 each contribute to the [4Fe-4S] cluster site.

This sequence belongs to the TtcA family. In terms of assembly, homodimer. It depends on Mg(2+) as a cofactor. Requires [4Fe-4S] cluster as cofactor.

The protein resides in the cytoplasm. The enzyme catalyses cytidine(32) in tRNA + S-sulfanyl-L-cysteinyl-[cysteine desulfurase] + AH2 + ATP = 2-thiocytidine(32) in tRNA + L-cysteinyl-[cysteine desulfurase] + A + AMP + diphosphate + H(+). Its pathway is tRNA modification. Catalyzes the ATP-dependent 2-thiolation of cytidine in position 32 of tRNA, to form 2-thiocytidine (s(2)C32). The sulfur atoms are provided by the cysteine/cysteine desulfurase (IscS) system. The sequence is that of tRNA-cytidine(32) 2-sulfurtransferase from Citrifermentans bemidjiense (strain ATCC BAA-1014 / DSM 16622 / JCM 12645 / Bem) (Geobacter bemidjiensis).